The following is a 249-amino-acid chain: Exosome complex component Rrp4 (249 aa).

The 72-residue stretch at 72-143 (GDTIIGLVED…RTISPVLTVK (72 aa)) folds into the S1 motif domain. The KH domain maps to 151–213 (PLGTVMDIMP…EALIEAINII (63 aa)).

The protein belongs to the RRP4 family. Component of the archaeal exosome complex. Forms a trimer of Rrp4 and/or Csl4 subunits. The trimer associates with a hexameric ring-like arrangement composed of 3 Rrp41-Rrp42 heterodimers.

Its subcellular location is the cytoplasm. In terms of biological role, non-catalytic component of the exosome, which is a complex involved in RNA degradation. Increases the RNA binding and the efficiency of RNA degradation. Confers strong poly(A) specificity to the exosome. This chain is Exosome complex component Rrp4, found in Sulfolobus acidocaldarius (strain ATCC 33909 / DSM 639 / JCM 8929 / NBRC 15157 / NCIMB 11770).